The sequence spans 483 residues: Septin-8 (483 aa).

The span at 1-16 shows a compositional bias: basic and acidic residues; sequence MAATDLERFSNAEPEP. The interval 1–22 is disordered; the sequence is MAATDLERFSNAEPEPRSLSLG. A2 carries the N-acetylalanine modification. A Phosphoserine modification is found at S10. Positions 41 to 307 constitute a Septin-type G domain; it reads QGFSFNILCV…ELYRRCKLEE (267 aa). Residues 51 to 58 form a G1 motif region; the sequence is GETGIGKS. Residues 51 to 58, G106, 187 to 195, G241, and R256 each bind GTP; these read GETGIGKS and KADTISKSE. A G3 motif region spans residues 103-106; sequence DAVG. The interval 186–189 is G4 motif; the sequence is AKAD. A coiled-coil region spans residues 320–413; the sequence is FSLQETYEAK…AVEALQSQAL (94 aa). Residues 411-420 show a composition bias toward polar residues; sequence QALHATSQQP. The segment at 411–443 is disordered; that stretch reads QALHATSQQPLRKDKDKKNRSDIGAHQPGMSLS. The span at 421 to 433 shows a compositional bias: basic and acidic residues; it reads LRKDKDKKNRSDI.

The protein belongs to the TRAFAC class TrmE-Era-EngA-EngB-Septin-like GTPase superfamily. Septin GTPase family. Septins polymerize into heterooligomeric protein complexes that form filaments, and can associate with cellular membranes, actin filaments and microtubules. GTPase activity is required for filament formation. Interacts with CDK14. Interacts with SEPTIN5. Interacts with SEPTIN7. Interacts with SEPTIN4. Interacts with VAMP2; the interaction inhibits interaction of VAMP2 with SYP. Interacts with STX1A. In terms of tissue distribution, widely expressed, including in brain, heart and platelets; most abundant in aorta. Isoform 2 is expressed at low levels in specific brain areas, such as occipital pole, frontal lobe, temporal lobe and putamen. Isoform 1 and 3 are highly expressed in specific brain areas, such as occipital pole, frontal lobe, temporal lobe and putamen. Isoform 2 is highly expressed in prostate, testis and ovary. Isoform 1 and isoform 3 are expressed at low levels in prostate, testis and ovary.

Its subcellular location is the cytoplasm. The protein resides in the cytoskeleton. It localises to the synapse. The protein localises to the cell projection. It is found in the axon. Its subcellular location is the cytoplasmic vesicle. The protein resides in the secretory vesicle. It localises to the synaptic vesicle membrane. The protein localises to the presynapse. Filament-forming cytoskeletal GTPase. May play a role in platelet secretion. Seems to participate in the process of SNARE complex formation in synaptic vesicles. Its function is as follows. Stabilizes BACE1 protein levels and promotes the sorting and accumulation of BACE1 to the recycling or endosomal compartments, modulating the beta-amyloidogenic processing of APP. The protein is Septin-8 of Homo sapiens (Human).